Consider the following 215-residue polypeptide: Protein FAM27D1 (215 aa).

Residues 74-172 (QPKTHTHTGM…RGTQADLSSR (99 aa)) form a disordered region. Residues 87-108 (THRERERNTQRLRDRERRENGR) show a composition bias toward basic and acidic residues. Positions 109 to 122 (HTHRHTHTLTHTHT) are enriched in basic residues. Composition is skewed to basic and acidic residues over residues 123–139 (HRDT…ETHT) and 149–162 (SAHD…REQP). The segment covering 163-172 (RGTQADLSSR) has biased composition (polar residues).

The protein belongs to the FAM27 family.

This is Protein FAM27D1 (FAM27D1) from Homo sapiens (Human).